A 422-amino-acid polypeptide reads, in one-letter code: Tk-subtilisin (422 aa).

The signal sequence occupies residues 1-24 (MKKSIALVLSIVLLAALFAVPASA). The propeptide occupies 25–106 (GEQNTIRVIV…SWLGGGSTQP (82 aa)). The 307-residue stretch at 111-417 (PWGIERVKAP…YGVVRAALAV (307 aa)) folds into the Peptidase S8 domain. Catalysis depends on charge relay system residues aspartate 139, histidine 177, and serine 348.

This sequence belongs to the peptidase S8 family. In terms of assembly, monomer. Requires Ca(2+) as cofactor.

The protein resides in the secreted. Has a broad substrate specificity with a slight preference to large hydrophobic amino acid residues at the P1 position. This Thermococcus kodakarensis (strain ATCC BAA-918 / JCM 12380 / KOD1) (Pyrococcus kodakaraensis (strain KOD1)) protein is Tk-subtilisin.